A 180-amino-acid polypeptide reads, in one-letter code: Sec-independent protein translocase protein TatB (180 aa).

A helical transmembrane segment spans residues 1–21; it reads MFDIGWSELLVIGVVALIAIG. The disordered stretch occupies residues 95 to 180; sequence IEGVDKPVES…AERLKDAKAS (86 aa). Over residues 103 to 123 the composition is skewed to low complexity; it reads ESQPAASAAPETSATVEAPAT. The span at 170 to 180 shows a compositional bias: basic and acidic residues; it reads EAERLKDAKAS.

Belongs to the TatB family. As to quaternary structure, the Tat system comprises two distinct complexes: a TatABC complex, containing multiple copies of TatA, TatB and TatC subunits, and a separate TatA complex, containing only TatA subunits. Substrates initially bind to the TatABC complex, which probably triggers association of the separate TatA complex to form the active translocon.

The protein resides in the cell inner membrane. In terms of biological role, part of the twin-arginine translocation (Tat) system that transports large folded proteins containing a characteristic twin-arginine motif in their signal peptide across membranes. Together with TatC, TatB is part of a receptor directly interacting with Tat signal peptides. TatB may form an oligomeric binding site that transiently accommodates folded Tat precursor proteins before their translocation. This chain is Sec-independent protein translocase protein TatB, found in Bradyrhizobium sp. (strain BTAi1 / ATCC BAA-1182).